The chain runs to 229 residues: Peptidase E (229 aa).

Residues Ser120, Asp135, and His157 each act as charge relay system in the active site.

The protein belongs to the peptidase S51 family.

It is found in the cytoplasm. The catalysed reaction is Dipeptidase E catalyzes the hydrolysis of dipeptides Asp-|-Xaa. It does not act on peptides with N-terminal Glu, Asn or Gln, nor does it cleave isoaspartyl peptides.. Its function is as follows. Hydrolyzes dipeptides containing N-terminal aspartate residues. May play a role in allowing the cell to use peptide aspartate to spare carbon otherwise required for the synthesis of the aspartate family of amino acids. The polypeptide is Peptidase E (Salmonella paratyphi C (strain RKS4594)).